A 169-amino-acid polypeptide reads, in one-letter code: FAM231A/C-like protein LOC102723383 (169 aa).

The interval 82–140 is disordered; sequence LIRSGSSQNESQEDQGAGLISQAGLKADNRRESSTWANEVEDRRPQCTPALNLTPSHPH.

The protein belongs to the FAM231 family.

The chain is FAM231A/C-like protein LOC102723383 from Homo sapiens (Human).